The following is a 106-amino-acid chain: Small ribosomal subunit protein uS10 (106 aa).

The protein belongs to the universal ribosomal protein uS10 family. As to quaternary structure, part of the 30S ribosomal subunit.

Involved in the binding of tRNA to the ribosomes. This Prochlorococcus marinus (strain MIT 9211) protein is Small ribosomal subunit protein uS10.